We begin with the raw amino-acid sequence, 97 residues long: MKIVREALAGTQESSDLMVKIAPADGELEIVIHSEVIKQFGDQIRQVVNETLHALAVRQGLIIVEDKGALDCVIRARLQSAVLRAAEEQPIDWSKMS.

Serine 14 bears the O-(phosphoribosyl dephospho-coenzyme A)serine mark.

The protein belongs to the CitD family. In terms of assembly, oligomer with a subunit composition of (alpha,beta,gamma)6.

It localises to the cytoplasm. Its function is as follows. Covalent carrier of the coenzyme of citrate lyase. The protein is Citrate lyase acyl carrier protein of Enterobacter sp. (strain 638).